A 79-amino-acid chain; its full sequence is MSSGGLLLLLGLLTLWEVLTPVSSKDRPKFYELPADIGPCEDFTGAFHYSPREHECIEFIYGGCEGNANNFNTLEECET.

The signal sequence occupies residues 1 to 24 (MSSGGLLLLLGLLTLWEVLTPVSS). A BPTI/Kunitz inhibitor domain is found at 31–79 (YELPADIGPCEDFTGAFHYSPREHECIEFIYGGCEGNANNFNTLEECET). Cystine bridges form between cysteine 40/cysteine 64 and cysteine 56/cysteine 77.

This sequence belongs to the venom Kunitz-type family. As to expression, expressed by the venom gland.

It is found in the secreted. Serine protease inhibitor. This is Kunitz-type serine protease inhibitor microlepidin-5 from Oxyuranus microlepidotus (Inland taipan).